The chain runs to 75 residues: Large ribosomal subunit protein bL31 (75 aa).

This sequence belongs to the bacterial ribosomal protein bL31 family. Type A subfamily. In terms of assembly, part of the 50S ribosomal subunit.

Functionally, binds the 23S rRNA. This Nitrobacter winogradskyi (strain ATCC 25391 / DSM 10237 / CIP 104748 / NCIMB 11846 / Nb-255) protein is Large ribosomal subunit protein bL31.